A 390-amino-acid chain; its full sequence is Transforming growth factor beta-1 proprotein (390 aa).

Positions 1-29 are cleaved as a signal peptide; it reads MPPSGLRLLPLLLPLPWLLVLTPGRPAAG. A straightjacket domain region spans residues 30-74; sequence LSTCKTIDMELVKRKRIEAIRGQILSKLRLASPPSQGEVPPGPLP. The tract at residues 75–271 is arm domain; sequence EAVLALYNST…ATPLERAQHL (197 aa). Asn-82, Asn-136, and Asn-176 each carry an N-linked (GlcNAc...) asparagine glycan. The interval 226 to 252 is bowtie tail; that stretch reads DSKDNKLHVEINGISPKRRGDLGTIHD. The short motif at 244–246 is the Cell attachment site element; sequence RGD. Intrachain disulfides connect Cys-285/Cys-294, Cys-293/Cys-356, Cys-322/Cys-387, and Cys-326/Cys-389.

This sequence belongs to the TGF-beta family. Homodimer; disulfide-linked. Interacts with the serine proteases, HTRA1 and HTRA3: the interaction with either inhibits TGFB1-mediated signaling and the HTRA protease activity is required for this inhibition. May interact with THSD4; this interaction may lead to sequestration by FBN1 microfibril assembly and attenuation of TGFB signaling. Interacts with CD109, DPT and ASPN. Interacts with EFEMP2. Interacts with TSKU; the interaction contributes to regulation of the hair cycle. Interacts with TGFBR3. As to quaternary structure, homodimer; disulfide-linked. Interacts with transforming growth factor beta-1 (TGF-beta-1) chain; interaction is non-covalent and maintains TGF-beta-1 in a latent state; each latency-associated peptide (LAP) monomer interacts with TGF-beta-1 in the other monomer. Interacts with LTBP1; leading to regulation of TGF-beta-1 activation. Interacts with LRRC32/GARP; leading to regulation of TGF-beta-1 activation on the surface of activated regulatory T-cells (Tregs). Interacts with LRRC33/NRROS; leading to regulation of TGF-beta-1 activation in macrophages and microglia. Interacts (via cell attachment site) with integrins ITGAV and ITGB6 (ITGAV:ITGB6), leading to release of the active TGF-beta-1. Interacts with NREP; the interaction results in a decrease in TGFB1 autoinduction. Interacts with HSP90AB1; inhibits latent TGFB1 activation. In terms of assembly, homodimer; disulfide-linked. Interacts with TGF-beta receptors (TGFBR1 and TGFBR2), leading to signal transduction. In terms of processing, transforming growth factor beta-1 proprotein: The precursor proprotein is cleaved in the Golgi apparatus by FURIN to form Transforming growth factor beta-1 (TGF-beta-1) and Latency-associated peptide (LAP) chains, which remain non-covalently linked, rendering TGF-beta-1 inactive. N-glycosylated. Deglycosylation leads to activation of Transforming growth factor beta-1 (TGF-beta-1); mechanisms triggering deglycosylation-driven activation of TGF-beta-1 are however unclear. In terms of tissue distribution, expressed in cardiomyocytes. Weakly expressed in the mammary glands, with a slight increase of expression following onset of involution.

Its subcellular location is the secreted. The protein resides in the extracellular space. The protein localises to the extracellular matrix. Transforming growth factor beta-1 proprotein: Precursor of the Latency-associated peptide (LAP) and Transforming growth factor beta-1 (TGF-beta-1) chains, which constitute the regulatory and active subunit of TGF-beta-1, respectively. Functionally, required to maintain the Transforming growth factor beta-1 (TGF-beta-1) chain in a latent state during storage in extracellular matrix. Associates non-covalently with TGF-beta-1 and regulates its activation via interaction with 'milieu molecules', such as LTBP1, LRRC32/GARP and LRRC33/NRROS, that control activation of TGF-beta-1. Interaction with LRRC33/NRROS regulates activation of TGF-beta-1 in macrophages and microglia. Interaction with LRRC32/GARP controls activation of TGF-beta-1 on the surface of activated regulatory T-cells (Tregs). Interaction with integrins (ITGAV:ITGB6 or ITGAV:ITGB8) results in distortion of the Latency-associated peptide chain and subsequent release of the active TGF-beta-1. In terms of biological role, multifunctional protein that regulates the growth and differentiation of various cell types and is involved in various processes, such as normal development, immune function, microglia function and responses to neurodegeneration. Activation into mature form follows different steps: following cleavage of the proprotein in the Golgi apparatus, Latency-associated peptide (LAP) and Transforming growth factor beta-1 (TGF-beta-1) chains remain non-covalently linked rendering TGF-beta-1 inactive during storage in extracellular matrix. At the same time, LAP chain interacts with 'milieu molecules', such as LTBP1, LRRC32/GARP and LRRC33/NRROS that control activation of TGF-beta-1 and maintain it in a latent state during storage in extracellular milieus. TGF-beta-1 is released from LAP by integrins (ITGAV:ITGB6 or ITGAV:ITGB8): integrin-binding to LAP stabilizes an alternative conformation of the LAP bowtie tail and results in distortion of the LAP chain and subsequent release of the active TGF-beta-1. Once activated following release of LAP, TGF-beta-1 acts by binding to TGF-beta receptors (TGFBR1 and TGFBR2), which transduce signal. While expressed by many cells types, TGF-beta-1 only has a very localized range of action within cell environment thanks to fine regulation of its activation by Latency-associated peptide chain (LAP) and 'milieu molecules'. Plays an important role in bone remodeling: acts as a potent stimulator of osteoblastic bone formation, causing chemotaxis, proliferation and differentiation in committed osteoblasts. Can promote either T-helper 17 cells (Th17) or regulatory T-cells (Treg) lineage differentiation in a concentration-dependent manner. At high concentrations, leads to FOXP3-mediated suppression of RORC and down-regulation of IL-17 expression, favoring Treg cell development. At low concentrations in concert with IL-6 and IL-21, leads to expression of the IL-17 and IL-23 receptors, favoring differentiation to Th17 cells. Stimulates sustained production of collagen through the activation of CREB3L1 by regulated intramembrane proteolysis (RIP). Mediates SMAD2/3 activation by inducing its phosphorylation and subsequent translocation to the nucleus. Positively regulates odontoblastic differentiation in dental papilla cells, via promotion of IPO7-mediated translocation of phosphorylated SMAD2 to the nucleus and subsequent transcription of target genes. Can induce epithelial-to-mesenchymal transition (EMT) and cell migration in various cell types. The sequence is that of Transforming growth factor beta-1 proprotein from Mus musculus (Mouse).